Consider the following 867-residue polypeptide: Nitrate reductase [NADPH] (867 aa).

Residues 38–58 (DIPLPPPSKEPTEVLSIDKPT) form a disordered region. Cys152 contributes to the Mo-molybdopterin binding site. The Cytochrome b5 heme-binding domain maps to 514-589 (NRIIDLQEFK…MPDYHIGTMD (76 aa)). Heme-binding residues include His549 and His572. In terms of domain architecture, FAD-binding FR-type spans 615 to 726 (KSWTKATLVK…KGPTGRFEYL (112 aa)). Residues 669 to 672 (RSYT), 686 to 690 (LVKIY), Phe691, 700 to 702 (KMT), and Thr753 contribute to the FAD site. An NADP(+)-binding site is contributed by 837–846 (MVLICGPEAM).

It belongs to the nitrate reductase family. Homodimer. Requires FAD as cofactor. It depends on heme as a cofactor. Mo-molybdopterin is required as a cofactor.

It catalyses the reaction nitrite + NADP(+) + H2O = nitrate + NADPH + H(+). Its function is as follows. Nitrate reductase is a key enzyme involved in the first step of nitrate assimilation in plants, fungi and bacteria. The polypeptide is Nitrate reductase [NADPH] (niaD) (Aspergillus niger).